Consider the following 827-residue polypeptide: Transcription factor SOX-6 (827 aa).

The span at 1 to 10 shows a compositional bias: polar residues; that stretch reads MSSKQATSPF. Residues 1 to 51 form a disordered region; the sequence is MSSKQATSPFACTVDGEETMTQDLTSREKEEGSDQHPASHLPLHPIMHNKP. Residues 25-34 show a composition bias toward basic and acidic residues; sequence TSREKEEGSD. Thr-119 is modified (phosphothreonine). Residues 184–257 are a coiled coil; that stretch reads LAEKERQLST…QHKINLLQQQ (74 aa). Disordered regions lie at residues 329–360 and 380–470; these read HVSHPQINPRLKGISDRLGRNLDPYEHGGGHS and SPGA…PIGG. The segment covering 341–357 has biased composition (basic and acidic residues); that stretch reads GISDRLGRNLDPYEHGG. The residue at position 399 (Ser-399) is a Phosphoserine. Thr-401 carries the post-translational modification Phosphothreonine. Glycyl lysine isopeptide (Lys-Gly) (interchain with G-Cter in SUMO) cross-links involve residues Lys-404 and Lys-417. 2 stretches are compositionally biased toward polar residues: residues 421-431 and 439-461; these read TAQPLNLSSRP and SPTSPTQSLFPASKTSPVNLPNK. 2 positions are modified to phosphoserine: Ser-439 and Ser-442. The segment at residues 620–688 is a DNA-binding region (HMG box); the sequence is IKRPMNAFMV…IHLEKYPNYK (69 aa). Disordered stretches follow at residues 752 to 772 and 786 to 827; these read TPSPQMTSDCSSTSASPEPSL and ASLA…VSAN. Over residues 795 to 808 the composition is skewed to acidic residues; it reads NGEDEMEAYDDYED.

As to quaternary structure, homodimer. Interacts with DAZAP2. May interact with CENPK. In terms of processing, sumoylation inhibits the transcriptional activity.

The protein localises to the nucleus. It is found in the cytoplasm. Its function is as follows. Transcription factor that plays a key role in several developmental processes, including neurogenesis, chondrocytes differentiation and cartilage formation. Specifically binds the 5'-AACAAT-3' DNA motif present in enhancers and super-enhancers and promotes expression of genes important for chondrogenesis. Required for overt chondrogenesis when condensed prechondrocytes differentiate into early stage chondrocytes: SOX5 and SOX6 cooperatively bind with SOX9 on active enhancers and super-enhancers associated with cartilage-specific genes, and thereby potentiate SOX9's ability to transactivate. Not involved in precartilaginous condensation, the first step in chondrogenesis, during which skeletal progenitors differentiate into prechondrocytes. Together with SOX5, required to form and maintain a pool of highly proliferating chondroblasts between epiphyses and metaphyses, to form columnar chondroblasts, delay chondrocyte prehypertrophy but promote hypertrophy, and to delay terminal differentiation of chondrocytes on contact with ossification fronts. Binds to the proximal promoter region of the myelin protein MPZ gene, and is thereby involved in the differentiation of oligodendroglia in the developing spinal tube. Binds to the gene promoter of MBP and acts as a transcriptional repressor. The protein is Transcription factor SOX-6 of Rattus norvegicus (Rat).